The chain runs to 494 residues: UPF0371 protein SPy_1343/M5005_Spy1095 (494 aa).

The protein belongs to the UPF0371 family.

The protein is UPF0371 protein SPy_1343/M5005_Spy1095 of Streptococcus pyogenes serotype M1.